We begin with the raw amino-acid sequence, 280 residues long: Protein IMPACT homolog (280 aa).

An RWD domain is found at 9-109; sequence DELLALESIY…QAAAERESKL (101 aa).

It belongs to the IMPACT family. As to quaternary structure, interacts (via N-terminus) with gcn1 (via C-terminus); this interaction reduces the gcn1-gcn20 complex formation and prevents the interaction of gcn1 with gcn2 protein kinase and gcn2 activation in amino acid-starved cells. Interacts (via C-terminus) with act1; this interaction occurs in a gcn1-independent manner. Interacts with rpl39; this interaction occurs in a gcn1-independent manner. Associates (via middle region) with ribosomes; this association occurs in a gcn1-independent manner and persists under amino acid starvation conditions.

It localises to the cytoplasm. It is found in the nucleus. Functionally, translational regulator that ensures constant high levels of translation under amino acid starvation. Plays a role as a negative regulator of the gcn2 kinase activity; impairs gcn1-mediated gcn2 activation, and hence gcn2-mediated eIF-2-alpha phosphorylation in amino acid-starved cells and subsequent down-regulation of protein synthesis. In normal conditions, it resides in a actin complex and has no activity. The protein is Protein IMPACT homolog (yih1) of Schizosaccharomyces pombe (strain 972 / ATCC 24843) (Fission yeast).